The sequence spans 479 residues: Integrin-linked protein kinase 1 (479 aa).

S17 and S26 each carry phosphoserine. The disordered stretch occupies residues 29-73; sequence FTRQSSLDPRRTNMRFSFGRQSSLDPIRRSPDSSKSDDEPHMSVP. Residues 54–69 show a composition bias toward basic and acidic residues; sequence PIRRSPDSSKSDDEPH. 2 ANK repeats span residues 77–106 and 110–139; these read DSTM…DVNS and DGRT…NIDA. A Protein kinase domain is found at 194 to 461; sequence LEVQVRKSDG…EIIIRLDKIV (268 aa). ATP contacts are provided by residues 200–208 and K222; that span reads KSDGISKGA. Catalysis depends on D319, which acts as the Proton acceptor.

The protein belongs to the protein kinase superfamily. Ser/Thr protein kinase family. In terms of assembly, interacts with CML9 and POT5/HAK5. Post-translationally, autophosphorylated at Ser-17 and Ser-26.

The protein localises to the cell membrane. The protein resides in the endoplasmic reticulum membrane. The enzyme catalyses L-seryl-[protein] + ATP = O-phospho-L-seryl-[protein] + ADP + H(+). It catalyses the reaction L-threonyl-[protein] + ATP = O-phospho-L-threonyl-[protein] + ADP + H(+). With respect to regulation, kinase activity is suppressed by interaction with CML9. Functions as a link between plant defense pathways, stress responses and potassium homeostasis. Promotes osmotic stress sensitivity, responses to the bacterial-derived pathogen-associated molecular pattern (PAMP) flg22, and resistance to bacterial pathogens. Promotes the accumulation of POT5/HAK5, a potassium transporter that mediates high-affinity uptake during potassium deficiency. In Arabidopsis thaliana (Mouse-ear cress), this protein is Integrin-linked protein kinase 1.